Here is a 394-residue protein sequence, read N- to C-terminus: Ribulose bisphosphate carboxylase large chain (394 aa).

Residue K5 is modified to N6,N6,N6-trimethyllysine. The substrate site is built by N114 and T164. K166 functions as the Proton acceptor in the catalytic mechanism. K168 contacts substrate. The Mg(2+) site is built by K192, D194, and E195. At K192 the chain carries N6-carboxylysine. H285 acts as the Proton acceptor in catalysis. R286, H318, and S370 together coordinate substrate.

Belongs to the RuBisCO large chain family. Type I subfamily. In terms of assembly, heterohexadecamer of 8 large chains and 8 small chains. Requires Mg(2+) as cofactor.

It is found in the plastid. It localises to the chloroplast. It catalyses the reaction 2 (2R)-3-phosphoglycerate + 2 H(+) = D-ribulose 1,5-bisphosphate + CO2 + H2O. The catalysed reaction is D-ribulose 1,5-bisphosphate + O2 = 2-phosphoglycolate + (2R)-3-phosphoglycerate + 2 H(+). RuBisCO catalyzes two reactions: the carboxylation of D-ribulose 1,5-bisphosphate, the primary event in carbon dioxide fixation, as well as the oxidative fragmentation of the pentose substrate in the photorespiration process. Both reactions occur simultaneously and in competition at the same active site. The protein is Ribulose bisphosphate carboxylase large chain (rbcL) of Euryale ferox (Gorgon plant).